We begin with the raw amino-acid sequence, 492 residues long: Cytochrome P450 monooxygenase ATEG_03631 (492 aa).

Residues 10 to 30 (FATLNPMVVVAIPVFLFVISL) form a helical membrane-spanning segment. A glycan (N-linked (GlcNAc...) asparagine) is linked at N309. A heme-binding site is contributed by C457.

Belongs to the cytochrome P450 family. The cofactor is heme.

Its subcellular location is the membrane. Its pathway is secondary metabolite biosynthesis. In terms of biological role, cytochrome P450 monooxygenase; part of the cluster A that mediates the biosynthesis of azasperpyranones, members of the azaphilone family that exhibit anti-cancer activities. Azasperpyranones are synthesized by 2 clusters, A and B. Cluster A is responsible for the production of the polyhydric phenol moiety while the azaphilonoid scaffold is produced by the cluster B. The non-reducing polyketide synthase ATEG_03629 produces 5-methyl orsellinic acid, which is then reduced to 5-methyl orsellinic aldehyde by the NRPS-like protein ATEG_03630. 5-methyl orsellinic aldehyde is then first hydroxylated by the FAD-dependent monooxygenase ATEG_03635 and subsequently hydroxylated by the cytochrome P450 monooxygenase ATEG_03631 to produce the unstable polyhydric phenol precursor of azasperpyranones. On the other hand, the polyketide synthase ATEG_07659 is responsible for producing the 3,5-dimethyloctadienone moiety from acetyl-CoA, three malonyl-CoA, and two S-adenosyl methionines (SAM). The 3,5-dimethyloctadienone moiety is then loaded onto the SAT domain of ATEG_07661 and extended with four malonyl-CoA and one SAM, which leads to the formation of 2,4-dihydroxy-6-(5,7-dimethyl-2-oxo-trans-3-trans-5-nonadienyl)-3-methylbenzaldehyde (compound 8) after reductive release and aldol condensation. The FAD-dependent monooxygenase ATEG_07662 is the next enzyme in the biosynthesis sequence and hydroxylates the side chain at the benzylic position of compound 8. In Aspergillus nidulans, afoF, the ortholog of the FAD-dependent oxygenase ATEG_07660, is the key enzyme for the biosynthesis of asperfuranone by catalyzing the hydroxylation at C-8 of to prevent the formation of a six-membered ring hemiacetal intermediate and thus facilitating the formation of a five-membered ring to produce asperfuranone. In Aspergillus terreus, ATEG_07660 is probably not functional, which leads to the formation of the six-membered ring hemiacetal intermediate presperpyranone instead of asperfuranone. Finally, ATEG_03636 is involved in the condensation of the polyhydric phenol moiety produced by cluster A and the perasperpyranone precursor produced by cluster B, to yield azasperpyranone A. Further modifications of azasperpyranone A result in the production of derivatives, including azasperpyranone B to F. The polypeptide is Cytochrome P450 monooxygenase ATEG_03631 (Aspergillus terreus (strain NIH 2624 / FGSC A1156)).